The sequence spans 320 residues: Probable protein adenylyltransferase aq_aa38 (320 aa).

Residues 76 to 206 (VSEALILWIY…AIVVVEKLSR (131 aa)) form the Fido domain. ATP is bound by residues 100–101 (KS), 157–159 (GNG), and arginine 163.

Belongs to the fic family.

It carries out the reaction L-tyrosyl-[protein] + ATP = O-(5'-adenylyl)-L-tyrosyl-[protein] + diphosphate. The enzyme catalyses L-threonyl-[protein] + ATP = 3-O-(5'-adenylyl)-L-threonyl-[protein] + diphosphate. In terms of biological role, probable adenylyltransferase that mediates the addition of adenosine 5'-monophosphate (AMP) to specific residues of target proteins. The polypeptide is Probable protein adenylyltransferase aq_aa38 (Aquifex aeolicus (strain VF5)).